We begin with the raw amino-acid sequence, 862 residues long: Glucans biosynthesis glucosyltransferase H (862 aa).

The segment at 1–25 is disordered; it reads MELPATSGLNAQPGNAEGTTASTRP. The span at 7–25 shows a compositional bias: polar residues; that stretch reads SGLNAQPGNAEGTTASTRP. 5 consecutive transmembrane segments (helical) span residues 188-210, 545-567, 597-619, 626-648, and 708-730; these read RLTL…SSVL, GVMA…ALLA, ALFS…VLWA, GGAV…AAPV, and FLWW…VFSS.

Belongs to the glycosyltransferase 2 family. OpgH subfamily.

Its subcellular location is the cell inner membrane. It functions in the pathway glycan metabolism; osmoregulated periplasmic glucan (OPG) biosynthesis. Functionally, involved in the biosynthesis of osmoregulated periplasmic glucans (OPGs). This chain is Glucans biosynthesis glucosyltransferase H, found in Ralstonia nicotianae (strain ATCC BAA-1114 / GMI1000) (Ralstonia solanacearum).